The following is a 566-amino-acid chain: E3 ubiquitin-protein ligase Rnf220 (566 aa).

A Glycyl lysine isopeptide (Lys-Gly) (interchain with G-Cter in SUMO2) cross-link involves residue Lys-277. A disordered region spans residues 277–300; the sequence is KREGDSPTASPHSSATEDLHHSDR. Basic and acidic residues predominate over residues 291–300; sequence ATEDLHHSDR. Ser-390 carries the post-translational modification Phosphoserine. Residues 485–513 adopt a coiled-coil conformation; it reads EESAVTTFEALKARVRELERQLSRGDRYK. The required for targeting to the cytoplasm stretch occupies residues 514–522; it reads CLICMDSYS. The RING-type zinc finger occupies 514–553; the sequence is CLICMDSYSMPLTSIQCWHVHCEECWLRTLGAKKLCPQCN.

In terms of assembly, interacts with SIN3B. Interacts with CTNNB1 (via Armadillo repeats 2-8). Interacts with USP7 (via MATH domain). Post-translationally, auto-ubiquitinated; leads to proteasomal degradation. As to expression, in the brain, expressed in the hippocampus, telenecephalon and cerebellum. No expression in astro glial cells or in neural progenitor cells.

It is found in the cytoplasm. The protein resides in the nucleus. The catalysed reaction is S-ubiquitinyl-[E2 ubiquitin-conjugating enzyme]-L-cysteine + [acceptor protein]-L-lysine = [E2 ubiquitin-conjugating enzyme]-L-cysteine + N(6)-ubiquitinyl-[acceptor protein]-L-lysine.. It functions in the pathway protein modification; protein ubiquitination. Its function is as follows. E3 ubiquitin-protein ligase that promotes the ubiquitination and proteasomal degradation of SIN3B. Independently of its E3 ligase activity, acts as a CTNNB1 stabilizer through USP7-mediated deubiquitination of CTNNB1 and promotes Wnt signaling. Plays a critical role in the regulation of nuclear lamina. The chain is E3 ubiquitin-protein ligase Rnf220 (Rnf220) from Mus musculus (Mouse).